Reading from the N-terminus, the 187-residue chain is UPF0669 protein C6orf120 homolog (187 aa).

Positions 1-23 are cleaved as a signal peptide; sequence MVEYWKRNFFMVLVLQAFYLANC. The N-linked (GlcNAc...) asparagine glycan is linked to asparagine 47.

It belongs to the UPF0669 family.

The protein resides in the secreted. The polypeptide is UPF0669 protein C6orf120 homolog (Xenopus tropicalis (Western clawed frog)).